The sequence spans 512 residues: PTS system mannitol-specific EIICB component (512 aa).

Over 1–28 (MSQTEEKKGIGRRVQAFGSFLSSMIMPN) the chain is Cytoplasmic. The PTS EIIC type-2 domain maps to 17–349 (FGSFLSSMIM…MKFTREPKQD (333 aa)). A helical membrane pass occupies residues 29–50 (IGAFIAWGFIAAIFIDNGWLPN). Residues 51–54 (KDLA) are Extracellular-facing. Residues 55-75 (TLAGPMITYLIPLLIAFSGGR) traverse the membrane as a helical segment. At 76–139 (LIYDLRGGII…QGFEMLFNNF (64 aa)) the chain is on the cytoplasmic side. Residues 140-161 (SAGILGFIMTIAGFKILAPLMK) form a helical membrane-spanning segment. Residues 162 to 170 (FIMHILSVA) lie on the Extracellular side of the membrane. The chain crosses the membrane as a helical span at residues 171–191 (VEALVHAHLLPLVSILVEPAK). Over 192–278 (IVFLNNAINH…VLMRPLLFIA (87 aa)) the chain is Cytoplasmic. Residues 279–298 (VILGGMTGVATYQATGFGFK) form a helical membrane-spanning segment. At 299-318 (SPASPGSFIVYCLNAPRGEF) the chain is on the extracellular side. A helical membrane pass occupies residues 319 to 340 (LHMLLGVFLAALVSFVVAALIM). Residues 341–512 (KFTREPKQDL…LNNLKKDDQA (172 aa)) lie on the Cytoplasmic side of the membrane. Residues 355–402 (AQMENTKGKKSSVASKLVSSDKNVNTEENASGNVSETSSSDDDPEALL) form a disordered region. Residues 365–376 (SSVASKLVSSDK) are compositionally biased toward low complexity. The segment covering 380–392 (TEENASGNVSETS) has biased composition (polar residues). The PTS EIIB type-2 domain maps to 419–512 (NHVIFACDAG…LNNLKKDDQA (94 aa)). The Phosphocysteine intermediate; for EIIB activity role is filled by Cys425. Cys425 carries the post-translational modification Phosphocysteine; by EIIA.

Homodimer.

The protein resides in the cell membrane. The catalysed reaction is D-mannitol(out) + N(pros)-phospho-L-histidyl-[protein] = D-mannitol 1-phosphate(in) + L-histidyl-[protein]. Its function is as follows. The phosphoenolpyruvate-dependent sugar phosphotransferase system (sugar PTS), a major carbohydrate active transport system, catalyzes the phosphorylation of incoming sugar substrates concomitantly with their translocation across the cell membrane. The enzyme II CmtAB PTS system is involved in D-mannitol transport. The protein is PTS system mannitol-specific EIICB component (mtlA) of Staphylococcus aureus (strain COL).